The sequence spans 215 residues: Protein-L-isoaspartate O-methyltransferase (215 aa).

Residue Ser-62 is part of the active site.

Belongs to the methyltransferase superfamily. L-isoaspartyl/D-aspartyl protein methyltransferase family.

The protein localises to the cytoplasm. The catalysed reaction is [protein]-L-isoaspartate + S-adenosyl-L-methionine = [protein]-L-isoaspartate alpha-methyl ester + S-adenosyl-L-homocysteine. Catalyzes the methyl esterification of L-isoaspartyl residues in peptides and proteins that result from spontaneous decomposition of normal L-aspartyl and L-asparaginyl residues. It plays a role in the repair and/or degradation of damaged proteins. The polypeptide is Protein-L-isoaspartate O-methyltransferase (Ruegeria pomeroyi (strain ATCC 700808 / DSM 15171 / DSS-3) (Silicibacter pomeroyi)).